Here is a 578-residue protein sequence, read N- to C-terminus: Putative transporter B0361.11 (578 aa).

The segment at 1-30 is disordered; sequence MSISRRSYEQFDEMKSENQENNSKKKSSER. The next 11 membrane-spanning stretches (helical) occupy residues 51 to 71, 148 to 168, 182 to 202, 232 to 252, 263 to 283, 339 to 359, 373 to 393, 399 to 419, 426 to 446, 457 to 477, and 486 to 506; these read IFTY…MYIM, FGLT…SMLA, ILAF…IFLI, AWIT…TLLV, YFIV…LPES, IWLL…YFAI, AFLY…PLMM, MIVI…TVFL, LVIM…HPIW, SLCF…SPYV, and WIPF…AFML. The span at 532–550 shows a compositional bias: low complexity; that stretch reads AYRRSKSSSSSVSALSKTS. The segment at 532 to 561 is disordered; that stretch reads AYRRSKSSSSSVSALSKTSVRSKKTLSSES.

The protein belongs to the major facilitator superfamily. Sugar transporter (TC 2.A.1.1) family.

It localises to the membrane. This Caenorhabditis elegans protein is Putative transporter B0361.11.